A 142-amino-acid chain; its full sequence is Small ribosomal subunit protein uS12 (142 aa).

The protein belongs to the universal ribosomal protein uS12 family. As to quaternary structure, part of the 30S ribosomal subunit.

Its function is as follows. With S4 and S5 plays an important role in translational accuracy. Located at the interface of the 30S and 50S subunits. The protein is Small ribosomal subunit protein uS12 of Thermoplasma volcanium (strain ATCC 51530 / DSM 4299 / JCM 9571 / NBRC 15438 / GSS1).